The sequence spans 143 residues: UPF0260 protein plu2141 (143 aa).

This sequence belongs to the UPF0260 family.

In Photorhabdus laumondii subsp. laumondii (strain DSM 15139 / CIP 105565 / TT01) (Photorhabdus luminescens subsp. laumondii), this protein is UPF0260 protein plu2141.